Here is a 140-residue protein sequence, read N- to C-terminus: Nucleoside diphosphate kinase (140 aa).

Residues Lys-11, Phe-59, Arg-87, Thr-93, Arg-104, and Asn-114 each contribute to the ATP site. His-117 acts as the Pros-phosphohistidine intermediate in catalysis.

Belongs to the NDK family. As to quaternary structure, homotetramer. Requires Mg(2+) as cofactor.

The protein resides in the cytoplasm. It carries out the reaction a 2'-deoxyribonucleoside 5'-diphosphate + ATP = a 2'-deoxyribonucleoside 5'-triphosphate + ADP. The catalysed reaction is a ribonucleoside 5'-diphosphate + ATP = a ribonucleoside 5'-triphosphate + ADP. Functionally, major role in the synthesis of nucleoside triphosphates other than ATP. The ATP gamma phosphate is transferred to the NDP beta phosphate via a ping-pong mechanism, using a phosphorylated active-site intermediate. In Rhizobium meliloti (strain 1021) (Ensifer meliloti), this protein is Nucleoside diphosphate kinase.